The primary structure comprises 1410 residues: DNA-directed RNA polymerase subunit beta' (1410 aa).

Cys-70, Cys-72, Cys-85, and Cys-88 together coordinate Zn(2+). Positions 460, 462, and 464 each coordinate Mg(2+). Zn(2+)-binding residues include Cys-814, Cys-888, Cys-895, and Cys-898.

The protein belongs to the RNA polymerase beta' chain family. As to quaternary structure, the RNAP catalytic core consists of 2 alpha, 1 beta, 1 beta' and 1 omega subunit. When a sigma factor is associated with the core the holoenzyme is formed, which can initiate transcription. Mg(2+) is required as a cofactor. Requires Zn(2+) as cofactor.

It catalyses the reaction RNA(n) + a ribonucleoside 5'-triphosphate = RNA(n+1) + diphosphate. DNA-dependent RNA polymerase catalyzes the transcription of DNA into RNA using the four ribonucleoside triphosphates as substrates. In Saccharophagus degradans (strain 2-40 / ATCC 43961 / DSM 17024), this protein is DNA-directed RNA polymerase subunit beta'.